The chain runs to 562 residues: Arginine--tRNA ligase (562 aa).

Positions 129 to 139 (ANPTGPLHVGH) match the 'HIGH' region motif.

Belongs to the class-I aminoacyl-tRNA synthetase family. In terms of assembly, monomer.

The protein resides in the cytoplasm. The catalysed reaction is tRNA(Arg) + L-arginine + ATP = L-arginyl-tRNA(Arg) + AMP + diphosphate. The chain is Arginine--tRNA ligase from Stenotrophomonas maltophilia (strain K279a).